Reading from the N-terminus, the 539-residue chain is MAYASRIINHSKKLKDVSTLLRRENAATIRYYSNTNRAPLNREDTFNSRLGYPPLERISICSTSTLPVSIIFSTTRSNLSSAMGRPIFGKEFSCLMQSARGFSSGSDLPPHQEIGMPSLSPTMTEGNIARWLKKEGDKVAPGEVLCEVETDKATVEMECMEEGYLAKIVKAEGSKEIQVGEVIAITVEDEEDIGKFKDYTPSSTADAAPTKAEPTPAPPKEEKVKQPSSPPEPKASKPSTPPTGDRVFASPLARKLAEDNNVPLSDIEGTGPEGRIVKADIDEYLASSGKGATAKPSKSTDSKAPALDYVDIPHSQIRKVTASRLAFSKQTIPHYYLTVDTCVDKLMALRSQLNSFKEASGGKRISVNDLVVKAAALALRKVPQCNSSWTDDYIRQFKNVNINVAVQTENGLYVPVVKDADRKGLSTIGEEVRLLAQKAKENSLKPEDYEGGTFTVSNLGGPFGIKQFCAVVNPPQAAILAVGSAEKRVVPGNGPDQFNFASYMPVTLSCDHRVVDGAIGAEWLKAFKGYIENPKSMLL.

Residues 1-102 constitute a mitochondrion transit peptide; the sequence is MAYASRIINH…SCLMQSARGF (102 aa). The Lipoyl-binding domain occupies 111–187; the sequence is HQEIGMPSLS…QVGEVIAITV (77 aa). An N6-lipoyllysine modification is found at Lys152. The interval 195 to 247 is disordered; the sequence is KFKDYTPSSTADAAPTKAEPTPAPPKEEKVKQPSSPPEPKASKPSTPPTGDRV. Positions 204–214 are enriched in low complexity; that stretch reads TADAAPTKAEP. The region spanning 248 to 285 is the Peripheral subunit-binding (PSBD) domain; sequence FASPLARKLAEDNNVPLSDIEGTGPEGRIVKADIDEYL. Catalysis depends on residues His512 and Asp516.

This sequence belongs to the 2-oxoacid dehydrogenase family. (R)-lipoate is required as a cofactor.

Its subcellular location is the mitochondrion matrix. It carries out the reaction N(6)-[(R)-dihydrolipoyl]-L-lysyl-[protein] + acetyl-CoA = N(6)-[(R)-S(8)-acetyldihydrolipoyl]-L-lysyl-[protein] + CoA. The pyruvate dehydrogenase complex catalyzes the overall conversion of pyruvate to acetyl-CoA and CO(2). It contains multiple copies of three enzymatic components: pyruvate dehydrogenase (E1), dihydrolipoamide acetyltransferase (E2) and lipoamide dehydrogenase (E3). The chain is Dihydrolipoyllysine-residue acetyltransferase component 3 of pyruvate dehydrogenase complex, mitochondrial from Arabidopsis thaliana (Mouse-ear cress).